The following is a 209-amino-acid chain: Large ribosomal subunit protein uL3 (209 aa).

The segment at 133–153 (THGNSLSHRVPGSIGQNQTPG) is disordered. Gln-150 carries the post-translational modification N5-methylglutamine.

It belongs to the universal ribosomal protein uL3 family. Part of the 50S ribosomal subunit. Forms a cluster with proteins L14 and L19. Post-translationally, methylated by PrmB.

Its function is as follows. One of the primary rRNA binding proteins, it binds directly near the 3'-end of the 23S rRNA, where it nucleates assembly of the 50S subunit. The protein is Large ribosomal subunit protein uL3 of Pectobacterium carotovorum subsp. carotovorum (strain PC1).